Here is a 361-residue protein sequence, read N- to C-terminus: Chorismate synthase (361 aa).

NADP(+) is bound by residues Arg48 and Arg54. FMN is bound by residues 125–127 (RSS), 238–239 (NA), Gly278, 293–297 (KPTSS), and Arg319.

It belongs to the chorismate synthase family. Homotetramer. FMNH2 serves as cofactor.

It catalyses the reaction 5-O-(1-carboxyvinyl)-3-phosphoshikimate = chorismate + phosphate. Its pathway is metabolic intermediate biosynthesis; chorismate biosynthesis; chorismate from D-erythrose 4-phosphate and phosphoenolpyruvate: step 7/7. Its function is as follows. Catalyzes the anti-1,4-elimination of the C-3 phosphate and the C-6 proR hydrogen from 5-enolpyruvylshikimate-3-phosphate (EPSP) to yield chorismate, which is the branch point compound that serves as the starting substrate for the three terminal pathways of aromatic amino acid biosynthesis. This reaction introduces a second double bond into the aromatic ring system. This chain is Chorismate synthase, found in Edwardsiella ictaluri (strain 93-146).